A 798-amino-acid chain; its full sequence is Serine/threonine-protein kinase SIK2 (798 aa).

The Protein kinase domain occupies Tyr26–Met277. ATP contacts are provided by residues Leu32–Val40 and Lys55. Asp148 functions as the Proton acceptor in the catalytic mechanism. The residue at position 181 (Thr181) is a Phosphothreonine. A Phosphoserine modification is found at Ser185. A UBA domain is found at Asp302 to Glu342. The span at Gln351–Gln361 shows a compositional bias: polar residues. Residues Gln351–Glu382 are disordered. Position 575 is a phosphoserine (Ser575). The segment at Ala672–Ala691 is disordered. The span at Cys673 to Leu685 shows a compositional bias: polar residues.

Belongs to the protein kinase superfamily. CAMK Ser/Thr protein kinase family. SNF1 subfamily. Mg(2+) serves as cofactor. Post-translationally, phosphorylated at Thr-181 by STK11/LKB1 in complex with STE20-related adapter-alpha (STRADA) pseudo kinase and CAB39. Ubiquitously expressed in embryonic tissue.

It localises to the cytoplasm. The catalysed reaction is L-seryl-[protein] + ATP = O-phospho-L-seryl-[protein] + ADP + H(+). It catalyses the reaction L-threonyl-[protein] + ATP = O-phospho-L-threonyl-[protein] + ADP + H(+). With respect to regulation, activated by phosphorylation on Thr-181. Functionally, phosphorylates IRS1 in insulin-stimulated adipocytes, potentially modulating the efficiency of insulin signal transduction. Inhibits CREB activity by phosphorylating and repressing the CREB-specific coactivators, CRTC1-3. The polypeptide is Serine/threonine-protein kinase SIK2 (SIK2) (Gallus gallus (Chicken)).